The sequence spans 415 residues: MTYHPKSDFIAVMMERGFLADCTDYQGLDEALMKGCQPGYIGFDATAKSLHVGSLIQIMMLRWLQKTGHKPITLMGGGTTKVGDPSFRADERPLLTPAQIDDNIAGIRKVFAAYIDYDSGAENAALMLNNEEWLDDLNYLDFLRDIGRHFSVNRMLSFESVKSRLDREQSLSFLEFNYMILQAYDFMELNRRYGCILQMGGSDQWGNIVNGIDLTRRVIDHEVYGLTSPLLTTSDGKKMGKSQDGAVWLNPDMRSPYEFWQFWRNTTDADVGRFLKLYTELPVGECDRLGALAGSEINAAKVILANEVTALCHGAEAAATAEATAREVFEKGGIGDDLPTLTLGAADLPASIVQLIVKTGLAKSGKEAKRLIAEDGARLNDAPLTDAGMMIEAGDLAAPIKLSAGKKRHALVQLG.

Tyrosine 40 contacts L-tyrosine. Residues 45 to 54 carry the 'HIGH' region motif; the sequence is ATAKSLHVGS. L-tyrosine contacts are provided by tyrosine 178 and glutamine 182. The 'KMSKS' region signature appears at 238 to 242; that stretch reads KMGKS. Lysine 241 contacts ATP. Residues 350–414 form the S4 RNA-binding domain; it reads ASIVQLIVKT…GKKRHALVQL (65 aa).

Belongs to the class-I aminoacyl-tRNA synthetase family. TyrS type 1 subfamily. As to quaternary structure, homodimer.

It localises to the cytoplasm. The catalysed reaction is tRNA(Tyr) + L-tyrosine + ATP = L-tyrosyl-tRNA(Tyr) + AMP + diphosphate + H(+). In terms of biological role, catalyzes the attachment of tyrosine to tRNA(Tyr) in a two-step reaction: tyrosine is first activated by ATP to form Tyr-AMP and then transferred to the acceptor end of tRNA(Tyr). The protein is Tyrosine--tRNA ligase of Ruegeria pomeroyi (strain ATCC 700808 / DSM 15171 / DSS-3) (Silicibacter pomeroyi).